A 109-amino-acid polypeptide reads, in one-letter code: ATPase inhibitor, mitochondrial (109 aa).

The N-terminal 22 residues, Met1–Arg22, are a transit peptide targeting the mitochondrion. Residues Leu27–Ala56 form an N-terminal inhibitory region region. Residues Leu27–Asp109 are disordered. The segment covering Leu30–Ser43 has biased composition (gly residues). 2 stretches are compositionally biased toward basic and acidic residues: residues Gln55–Glu69 and His77–Arg98. A coiled-coil region spans residues Ile71 to Asp109. Residues His78–Asp109 are antiparallel alpha-helical coiled coil region. Over residues His99 to Asp109 the composition is skewed to basic residues.

It belongs to the ATPase inhibitor family. As to quaternary structure, homodimer; represents the active form and is present at a pH value below 6.5. Homotetramer; represents the inactive form and is present at a pH value above 7.0.

The protein localises to the mitochondrion. In terms of biological role, endogenous F(1)F(o)-ATPase inhibitor limiting ATP depletion when the mitochondrial membrane potential falls below a threshold and the F(1)F(o)-ATP synthase starts hydrolyzing ATP to pump protons out of the mitochondrial matrix. Required to avoid the consumption of cellular ATP when the F(1)F(o)-ATP synthase enzyme acts as an ATP hydrolase. Indirectly acts as a regulator of heme synthesis in erythroid tissues: regulates heme synthesis by modulating the mitochondrial pH and redox potential, allowing fech to efficiently catalyze the incorporation of iron into protoporphyrin IX to produce heme. This chain is ATPase inhibitor, mitochondrial, found in Xenopus tropicalis (Western clawed frog).